Consider the following 230-residue polypeptide: Heptaprenylglyceryl phosphate synthase (230 aa).

Lysine 12 lines the sn-glycerol 1-phosphate pocket. Residues aspartate 14 and threonine 40 each contribute to the Mg(2+) site. Residues 159–164 (YIEYSG), glycine 189, and 209–210 (GD) contribute to the sn-glycerol 1-phosphate site.

This sequence belongs to the GGGP/HepGP synthase family. Group I subfamily. In terms of assembly, homodimer. The cofactor is Mg(2+).

It catalyses the reaction sn-glycerol 1-phosphate + all-trans-heptaprenyl diphosphate = 3-heptaprenyl-sn-glycero-1-phosphate + diphosphate. Its pathway is membrane lipid metabolism; glycerophospholipid metabolism. Prenyltransferase that catalyzes in vivo the transfer of the heptaprenyl moiety of heptaprenyl pyrophosphate (HepPP; 35 carbon atoms) to the C3 hydroxyl of sn-glycerol-1-phosphate (G1P), producing heptaprenylglyceryl phosphate (HepGP). This reaction is an ether-bond-formation step in the biosynthesis of archaea-type G1P-based membrane lipids found in Bacillales. This chain is Heptaprenylglyceryl phosphate synthase, found in Staphylococcus aureus (strain Mu3 / ATCC 700698).